The chain runs to 495 residues: Divinyl ether synthase CYP74M3 (495 aa).

Cys-446 is a binding site for heme.

The protein belongs to the cytochrome P450 family. Requires heme as cofactor.

The catalysed reaction is (13S)-hydroperoxy-(9Z,11E)-octadecadienoate = etheroleate + H2O. The enzyme catalyses (13S)-hydroperoxy-(9Z,11E,15Z)-octadecatrienoate = etherolenate + H2O. Its pathway is lipid metabolism; oxylipin biosynthesis. In terms of biological role, divinyl ether synthase involved in oxylipin biosynthesis. Catalyzes the conversion of (13S)-hydroperoxy-(9Z,11E)-octadecadienoate (13-HPOD) to etheroleate and (13S)-hydroperoxy-(9Z,11E,15Z)-octadecatrienoate (13-HPOT) to etherolenate. Has no activity with the corresponding 9-hydroperoxides (9-HPOD and 9-HPOT). This Selaginella moellendorffii (Spikemoss) protein is Divinyl ether synthase CYP74M3.